Here is a 485-residue protein sequence, read N- to C-terminus: Cobyric acid synthase (485 aa).

One can recognise a GATase cobBQ-type domain in the interval 250 to 436 (RRIVACPILP…IHGLLASPAL (187 aa)). Catalysis depends on C332, which acts as the Nucleophile. The active site involves H428.

It belongs to the CobB/CobQ family. CobQ subfamily.

The protein operates within cofactor biosynthesis; adenosylcobalamin biosynthesis. Catalyzes amidations at positions B, D, E, and G on adenosylcobyrinic A,C-diamide. NH(2) groups are provided by glutamine, and one molecule of ATP is hydrogenolyzed for each amidation. This is Cobyric acid synthase from Sphingopyxis alaskensis (strain DSM 13593 / LMG 18877 / RB2256) (Sphingomonas alaskensis).